A 297-amino-acid chain; its full sequence is 33 kDa chaperonin (297 aa).

2 disulfide bridges follow: cysteine 239–cysteine 241 and cysteine 272–cysteine 275.

This sequence belongs to the HSP33 family. Post-translationally, under oxidizing conditions two disulfide bonds are formed involving the reactive cysteines. Under reducing conditions zinc is bound to the reactive cysteines and the protein is inactive.

Its subcellular location is the cytoplasm. Its function is as follows. Redox regulated molecular chaperone. Protects both thermally unfolding and oxidatively damaged proteins from irreversible aggregation. Plays an important role in the bacterial defense system toward oxidative stress. In Clostridium acetobutylicum (strain ATCC 824 / DSM 792 / JCM 1419 / IAM 19013 / LMG 5710 / NBRC 13948 / NRRL B-527 / VKM B-1787 / 2291 / W), this protein is 33 kDa chaperonin.